The primary structure comprises 189 residues: Frataxin-like protein, mitochondrial (189 aa).

Residues 1–50 (MNCARLHQRIPLRAMALTTTSYPALAPSHSFANASTSVMTASAMAVAHRA) constitute a mitochondrion transit peptide.

Belongs to the frataxin family. As to quaternary structure, interacts with IscU; the interaction is direct.

It localises to the mitochondrion. The enzyme catalyses 4 Fe(2+) + O2 + 4 H(+) = 4 Fe(3+) + 2 H2O. Its function is as follows. Iron-binding protein which binds 2 iron atoms per monomer. Probably, acts as an iron carrier for the biosynthesis of Fe-S clusters. Stimulates the cysteine desulphurase activity of IscS in the presence of IscU. The sequence is that of Frataxin-like protein, mitochondrial from Leishmania donovani.